A 238-amino-acid polypeptide reads, in one-letter code: Fatty acid metabolism regulator protein (238 aa).

Positions 6–74 (KGPASFAEKY…HGKPTRVNNF (69 aa)) constitute an HTH gntR-type domain. Positions 34–53 (ERELSELIGVTRTTLREVLQ) form a DNA-binding region, H-T-H motif.

As to quaternary structure, homodimer.

It localises to the cytoplasm. Multifunctional regulator of fatty acid metabolism. The polypeptide is Fatty acid metabolism regulator protein (Shewanella baltica (strain OS155 / ATCC BAA-1091)).